A 348-amino-acid polypeptide reads, in one-letter code: Phosphoribosylformylglycinamidine cyclo-ligase (348 aa).

It belongs to the AIR synthase family.

The protein resides in the cytoplasm. It carries out the reaction 2-formamido-N(1)-(5-O-phospho-beta-D-ribosyl)acetamidine + ATP = 5-amino-1-(5-phospho-beta-D-ribosyl)imidazole + ADP + phosphate + H(+). It functions in the pathway purine metabolism; IMP biosynthesis via de novo pathway; 5-amino-1-(5-phospho-D-ribosyl)imidazole from N(2)-formyl-N(1)-(5-phospho-D-ribosyl)glycinamide: step 2/2. The chain is Phosphoribosylformylglycinamidine cyclo-ligase from Sorangium cellulosum (strain So ce56) (Polyangium cellulosum (strain So ce56)).